The following is a 73-amino-acid chain: Translation initiation factor IF-1 (73 aa).

Positions 1 to 73 constitute an S1-like domain; that stretch reads MPKKDGAIEI…TRGRIVYRYK (73 aa).

Belongs to the IF-1 family. In terms of assembly, component of the 30S ribosomal translation pre-initiation complex which assembles on the 30S ribosome in the order IF-2 and IF-3, IF-1 and N-formylmethionyl-tRNA(fMet); mRNA recruitment can occur at any time during PIC assembly.

The protein resides in the cytoplasm. In terms of biological role, one of the essential components for the initiation of protein synthesis. Stabilizes the binding of IF-2 and IF-3 on the 30S subunit to which N-formylmethionyl-tRNA(fMet) subsequently binds. Helps modulate mRNA selection, yielding the 30S pre-initiation complex (PIC). Upon addition of the 50S ribosomal subunit IF-1, IF-2 and IF-3 are released leaving the mature 70S translation initiation complex. This chain is Translation initiation factor IF-1, found in Salinispora arenicola (strain CNS-205).